The chain runs to 461 residues: Nucleobindin-1 (461 aa).

An N-terminal signal peptide occupies residues 1-26 (MPPSGPRGTLLLLPLLLLLLLRAVLA). An O-glycosylated at one site region spans residues 42–51 (TESPDTGLYY). Ser-86 is modified (phosphoserine; by FAM20C). Thr-148 is subject to Phosphothreonine; by FAM20C. The stretch at 150–218 (EARDLELLIQ…QQRRHREHPK (69 aa)) forms a coiled coil. The DNA-binding element occupies 172–218 (HHEEFKRYEMLKEHERRRYLESLGEEQRKEAERKLEEQQRRHREHPK). Basic and acidic residues predominate over residues 193–210 (SLGEEQRKEAERKLEEQQ). Positions 193 to 221 (SLGEEQRKEAERKLEEQQRRHREHPKVNV) are disordered. Residues 228-321 (LKEVWEELDG…VTLEEFLAST (94 aa)) form a binds to GNAI2 and GNAI3 region. 2 EF-hand domains span residues 240–275 (PNRF…ELEK) and 292–327 (ERLR…KEFG). Asp-253, Asn-255, Asp-257, Glu-264, Asp-305, Asn-307, Asp-309, and Glu-316 together coordinate Ca(2+). The GBA signature appears at 303 to 333 (NVDTNQDRLVTLEEFLASTQRKEFGDTGEGW). Residues 341 to 407 (AYTEEELRRF…QRKQQQQQQQ (67 aa)) are a coiled coil. Positions 368 to 461 (LSQETEALGR…LPEVEVPQHL (94 aa)) are disordered. Ser-369 is subject to Phosphoserine; by FAM20C. The segment covering 437–461 (DQKEVDTSEKKLLERLPEVEVPQHL) has biased composition (basic and acidic residues).

Belongs to the nucleobindin family. As to quaternary structure, interacts (via GBA motif) with guanine nucleotide-binding protein G(i) alpha subunits GNAI1, GNAI2 and GNAI3 with higher affinity for GNAI1 and GNAI3 than for GNAI2. Preferentially interacts with inactive rather than active GNAI3. Interaction with GNAI3 is inhibited when NUCB1 binds calcium, probably due to a conformational change which renders the GBA motif inaccessible. Post-translationally, O-glycosylated. Expressed both in fetal and adult heart, lung, liver, kidney and brain, and in adult skeletal muscle, placenta and pancreas.

The protein localises to the golgi apparatus. It is found in the cis-Golgi network membrane. Its subcellular location is the cytoplasm. It localises to the secreted. Major calcium-binding protein of the Golgi which may have a role in calcium homeostasis. Acts as a non-receptor guanine nucleotide exchange factor which binds to and activates alpha subunits of guanine nucleotide-binding proteins (G proteins). In Homo sapiens (Human), this protein is Nucleobindin-1 (NUCB1).